Here is a 305-residue protein sequence, read N- to C-terminus: Coenzyme PQQ synthesis protein B (305 aa).

It belongs to the PqqB family.

It functions in the pathway cofactor biosynthesis; pyrroloquinoline quinone biosynthesis. Its function is as follows. May be involved in the transport of PQQ or its precursor to the periplasm. The polypeptide is Coenzyme PQQ synthesis protein B (Methylobacillus flagellatus).